A 361-amino-acid polypeptide reads, in one-letter code: WAT1-related protein At4g01450 (361 aa).

10 consecutive transmembrane segments (helical) span residues 8 to 28, 40 to 60, 76 to 96, 103 to 123, 132 to 152, 177 to 197, 209 to 229, 243 to 263, 273 to 293, and 298 to 318; these read WAPMIVLIVSNMIAGMVNALV, VIATYRLGISTLFLLPVAYFW, LFVSALFGASLMQYFYLLGLS, GSAFWAIMPSLTFVMALIFGF, IGYGVVLGTLISLVGGLLLTM, WIKGCFFLLTGVVLFSSWMLI, YSSTVILSVFGTLQCALLSLI, LTIITVVIAGVVAQGMCTVGM, VVSSSFSPVVLMSATVFDFLI, and IYLGSVIGSVVVVIGLYIFLW. 2 EamA domains span residues 21 to 142 and 194 to 317; these read AGMV…GTLI and WMLI…YIFL.

It belongs to the drug/metabolite transporter (DMT) superfamily. Plant drug/metabolite exporter (P-DME) (TC 2.A.7.4) family.

It localises to the membrane. This chain is WAT1-related protein At4g01450, found in Arabidopsis thaliana (Mouse-ear cress).